We begin with the raw amino-acid sequence, 256 residues long: Imidazole glycerol phosphate synthase subunit HisF (256 aa).

Catalysis depends on residues aspartate 11 and aspartate 130.

Belongs to the HisA/HisF family. Heterodimer of HisH and HisF.

The protein localises to the cytoplasm. It carries out the reaction 5-[(5-phospho-1-deoxy-D-ribulos-1-ylimino)methylamino]-1-(5-phospho-beta-D-ribosyl)imidazole-4-carboxamide + L-glutamine = D-erythro-1-(imidazol-4-yl)glycerol 3-phosphate + 5-amino-1-(5-phospho-beta-D-ribosyl)imidazole-4-carboxamide + L-glutamate + H(+). It participates in amino-acid biosynthesis; L-histidine biosynthesis; L-histidine from 5-phospho-alpha-D-ribose 1-diphosphate: step 5/9. Its function is as follows. IGPS catalyzes the conversion of PRFAR and glutamine to IGP, AICAR and glutamate. The HisF subunit catalyzes the cyclization activity that produces IGP and AICAR from PRFAR using the ammonia provided by the HisH subunit. This is Imidazole glycerol phosphate synthase subunit HisF from Prochlorococcus marinus (strain NATL1A).